The primary structure comprises 226 residues: Large ribosomal subunit protein uL3 (226 aa).

The span at Met135–Val150 shows a compositional bias: polar residues. The tract at residues Met135 to Gln158 is disordered. Gln158 bears the N5-methylglutamine mark.

Belongs to the universal ribosomal protein uL3 family. In terms of assembly, part of the 50S ribosomal subunit. Forms a cluster with proteins L14 and L19. Methylated by PrmB.

Its function is as follows. One of the primary rRNA binding proteins, it binds directly near the 3'-end of the 23S rRNA, where it nucleates assembly of the 50S subunit. The sequence is that of Large ribosomal subunit protein uL3 from Variovorax paradoxus (strain S110).